The chain runs to 66 residues: Large ribosomal subunit protein bL35 (66 aa).

It belongs to the bacterial ribosomal protein bL35 family.

The polypeptide is Large ribosomal subunit protein bL35 (Jannaschia sp. (strain CCS1)).